A 331-amino-acid polypeptide reads, in one-letter code: Proton-translocating ferredoxin:NAD(+) oxidoreductase complex subunit D (331 aa).

Helical transmembrane passes span 23 to 43 (ESVSKIMWSVCLALTPAAVFG), 44 to 64 (VFNFGIHALEVIITGIIAAVV), and 84 to 106 (AFLTGLLLSMCLPPDIPPYMVAI). FMN phosphoryl threonine is present on threonine 163. 4 helical membrane-spanning segments follow: residues 196-216 (NGSIGETSTILLVLGGLYLIY), 226-246 (VVMIGTVGILTWAFGGTTGIF), 251-271 (VFHMMAGGLVIGAFFMATDMV), and 273-293 (IPMTIKGQIIFALGAGALTSL).

This sequence belongs to the NqrB/RnfD family. The complex is composed of six subunits: RnfA, RnfB, RnfC, RnfD, RnfE and RnfG. It depends on FMN as a cofactor.

Its subcellular location is the cell membrane. Part of a membrane-bound complex that couples electron transfer with translocation of ions across the membrane. Couples electron transfer from reduced ferredoxin to NAD(+) with translocation of H(+) out of the cell. Essential for energy conservation during autotrophic growth. Contributes to ATP synthesis during heterotrophic growth. In Clostridium ljungdahlii (strain ATCC 55383 / DSM 13528 / PETC), this protein is Proton-translocating ferredoxin:NAD(+) oxidoreductase complex subunit D.